A 333-amino-acid polypeptide reads, in one-letter code: Ketol-acid reductoisomerase (NADP(+)) (333 aa).

One can recognise a KARI N-terminal Rossmann domain in the interval 1–171 (MSNDTQPTIA…GGARANIIKT (171 aa)). NADP(+)-binding positions include 14–17 (YGSQ), Arg-37, Thr-42, and 72–75 (DMVQ). His-97 is an active-site residue. Gly-123 contacts NADP(+). A KARI C-terminal knotted domain is found at 172 to 317 (TFKEETETDL…KKLRAKMVWL (146 aa)). Asp-180, Glu-184, Glu-216, and Glu-220 together coordinate Mg(2+). Ser-241 lines the substrate pocket.

The protein belongs to the ketol-acid reductoisomerase family. Requires Mg(2+) as cofactor.

It catalyses the reaction (2R)-2,3-dihydroxy-3-methylbutanoate + NADP(+) = (2S)-2-acetolactate + NADPH + H(+). The enzyme catalyses (2R,3R)-2,3-dihydroxy-3-methylpentanoate + NADP(+) = (S)-2-ethyl-2-hydroxy-3-oxobutanoate + NADPH + H(+). It functions in the pathway amino-acid biosynthesis; L-isoleucine biosynthesis; L-isoleucine from 2-oxobutanoate: step 2/4. Its pathway is amino-acid biosynthesis; L-valine biosynthesis; L-valine from pyruvate: step 2/4. In terms of biological role, involved in the biosynthesis of branched-chain amino acids (BCAA). Catalyzes an alkyl-migration followed by a ketol-acid reduction of (S)-2-acetolactate (S2AL) to yield (R)-2,3-dihydroxy-isovalerate. In the isomerase reaction, S2AL is rearranged via a Mg-dependent methyl migration to produce 3-hydroxy-3-methyl-2-ketobutyrate (HMKB). In the reductase reaction, this 2-ketoacid undergoes a metal-dependent reduction by NADPH to yield (R)-2,3-dihydroxy-isovalerate. The polypeptide is Ketol-acid reductoisomerase (NADP(+)) (Xanthomonas campestris pv. campestris (strain 8004)).